The following is a 336-amino-acid chain: DNA repair protein RAD51 homolog B (336 aa).

The 30-residue stretch at 45-74 (TVEAVAYAPKKELLNIKGISEAKAEKILAE) folds into the HhH domain. 124-131 (GEFRTGKT) provides a ligand contact to ATP. Residues 242–257 (LARFLRMLLRLADEFG) carry the Nuclear export signal motif.

This sequence belongs to the RecA family. RAD51 subfamily. As to quaternary structure, forms linear homooligomers, giving rise to a RAD51 nucleoprotein filament, which is essential for strand-pairing reactions during DNA recombination.

Its subcellular location is the nucleus. It localises to the cytoplasm. The protein resides in the chromosome. In terms of biological role, plays an important role in homologous strand exchange, a key step in DNA repair through homologous recombination (HR). Binds to single-stranded DNA in an ATP-dependent manner to form nucleoprotein filaments which are essential for the homology search and strand exchange. Catalyzes the recognition of homology and strand exchange between homologous DNA partners to form a joint molecule between a processed DNA break and the repair template. Recruited to resolve stalled replication forks during replication stress. Also involved in interstrand cross-link repair. The chain is DNA repair protein RAD51 homolog B (rad51-b) from Xenopus laevis (African clawed frog).